Consider the following 639-residue polypeptide: MEIIRSNFKSNLHKVYQAIEEADFFAIDGEFSGISDGPSVSALTNGFDTPEERYQKLKKHSMDFLLFQFGLCTFKYDYTDSKYITKSFNFYVFPKPFNRSSPDVKFVCQSSSIDFLASQGFDFNKVFRNGIPYLNQEEERQLREQYDEKRSQANGAGALSYVSPNTSKCPVTIPEDQKKFIDQVVEKIEDLLQSEENKNLDLEPCTGFQRKLIYQTLSWKYPKGIHVETLETEKKERYIVISKVDEEERKRREQQKHAKEQEELNDAVGFSRVIHAIANSGKLVIGHNMLLDVMHTVHQFYCPLPADLSEFKEMTTCVFPRLLDTKLMASTQPFKDIINNTSLAELEKRLKETPFNPPKVESAEGFPSYDTASEQLHEAGYDAYITGLCFISMANYLGSFLSPPKIHVSARSKLIEPFFNKLFLMRVMDIPYLNLEGPDLQPKRDHVLHVTFPKEWKTSDLYQLFSAFGNIQISWIDDTSAFVSLSQPEQVKIAVNTSKYAESYRIQTYAEYMGRKQEEKQIKRKWTEDSWKEADSKRLNPQCIPYTLQNHYYRNNSFTAPSTVGKRNLSPSQEEAGLEDGVSGEISDTELEQTDSCAEPLSEGRKKAKKLKRMKKELSPAGSISKNSPATLFEVPDTW.

Positions 28 and 30 each coordinate a divalent metal cation. Phosphoserine occurs at positions 163 and 167. The R3H domain maps to 178–245 (KKFIDQVVEK…ERYIVISKVD (68 aa)). N6-acetyllysine is present on lysine 220. 2 residues coordinate a divalent metal cation: aspartate 292 and aspartate 382. Lysine 499 is modified (N6-acetyllysine). The residue at position 530 (serine 530) is a Phosphoserine. Serine 557 bears the Phosphoserine; by MAPKAPK2 mark. A disordered region spans residues 560–639 (APSTVGKRNL…ATLFEVPDTW (80 aa)). Residues serine 583 and serine 587 each carry the phosphoserine modification. A compositionally biased stretch (basic residues) spans 606–615 (KKAKKLKRMK). Phosphoserine is present on residues serine 619, serine 623, and serine 628. The residue at position 631 (threonine 631) is a Phosphothreonine.

It belongs to the CAF1 family. In terms of assembly, homodimer. Found in a mRNA decay complex with RENT1, RENT2 and RENT3B. Interacts with KHSRP. Interacts with CELF1/CUGBP1. Interacts with ZC3HAV1 in an RNA-independent manner. Interacts with DHX36. It depends on Mg(2+) as a cofactor. Phosphorylation by MAPKAPK2, preventing GADD45A mRNA degradation after genotoxic stress. Ubiquitous.

The protein resides in the nucleus. Its subcellular location is the cytoplasm. The protein localises to the nucleolus. The enzyme catalyses Exonucleolytic cleavage of poly(A) to 5'-AMP.. Its function is as follows. 3'-exoribonuclease that has a preference for poly(A) tails of mRNAs, thereby efficiently degrading poly(A) tails. Exonucleolytic degradation of the poly(A) tail is often the first step in the decay of eukaryotic mRNAs and is also used to silence certain maternal mRNAs translationally during oocyte maturation and early embryonic development. Interacts with both the 3'-end poly(A) tail and the 5'-end cap structure during degradation, the interaction with the cap structure being required for an efficient degradation of poly(A) tails. Involved in nonsense-mediated mRNA decay, a critical process of selective degradation of mRNAs that contain premature stop codons. Also involved in degradation of inherently unstable mRNAs that contain AU-rich elements (AREs) in their 3'-UTR, possibly via its interaction with KHSRP. Probably mediates the removal of poly(A) tails of AREs mRNAs, which constitutes the first step of destabilization. Also able to recognize and trim poly(A) tails of microRNAs such as MIR21 and H/ACA box snoRNAs (small nucleolar RNAs) leading to microRNAs degradation or snoRNA increased stability. The polypeptide is Poly(A)-specific ribonuclease PARN (PARN) (Homo sapiens (Human)).